Consider the following 341-residue polypeptide: GTP 3',8-cyclase (341 aa).

The Radical SAM core domain occupies 11–231; sequence KRNRPLRDLR…DLINKHMPVE (221 aa). R20 lines the GTP pocket. [4Fe-4S] cluster contacts are provided by C27 and C31. Y33 serves as a coordination point for S-adenosyl-L-methionine. Position 34 (C34) interacts with [4Fe-4S] cluster. R75 provides a ligand contact to GTP. Position 79 (G79) interacts with S-adenosyl-L-methionine. T106 contacts GTP. S130 contributes to the S-adenosyl-L-methionine binding site. K167 is a GTP binding site. Position 201 (M201) interacts with S-adenosyl-L-methionine. The [4Fe-4S] cluster site is built by C265 and C268. GTP is bound at residue 270 to 272; sequence RAR. C282 is a binding site for [4Fe-4S] cluster.

This sequence belongs to the radical SAM superfamily. MoaA family. Monomer and homodimer. Requires [4Fe-4S] cluster as cofactor.

It catalyses the reaction GTP + AH2 + S-adenosyl-L-methionine = (8S)-3',8-cyclo-7,8-dihydroguanosine 5'-triphosphate + 5'-deoxyadenosine + L-methionine + A + H(+). The protein operates within cofactor biosynthesis; molybdopterin biosynthesis. In terms of biological role, catalyzes the cyclization of GTP to (8S)-3',8-cyclo-7,8-dihydroguanosine 5'-triphosphate. Required for both nitrate assimilation and respiration. In Bacillus subtilis (strain 168), this protein is GTP 3',8-cyclase.